Consider the following 655-residue polypeptide: DNA topoisomerase 4 subunit B (655 aa).

ATP contacts are provided by residues Tyr-9, Asn-49, Asp-76, 116-122 (GLHGVGA), and Lys-340. The segment covering 387–397 (AARKAREEARS) has biased composition (basic and acidic residues). Positions 387-419 (AARKAREEARSGKKRKKSEATLSGKLTPAGSRN) are disordered. Residues 423–537 (NELYLVEGDS…HGKVFIALPP (115 aa)) form the Toprim domain. The Mg(2+) site is built by Glu-429, Asp-502, and Asp-504.

Belongs to the type II topoisomerase family. ParE type 2 subfamily. In terms of assembly, heterotetramer composed of ParC and ParE. Mg(2+) serves as cofactor. Requires Mn(2+) as cofactor. Ca(2+) is required as a cofactor.

It catalyses the reaction ATP-dependent breakage, passage and rejoining of double-stranded DNA.. In terms of biological role, topoisomerase IV is essential for chromosome segregation. It relaxes supercoiled DNA. Performs the decatenation events required during the replication of a circular DNA molecule. This chain is DNA topoisomerase 4 subunit B, found in Bacillus subtilis (strain 168).